A 257-amino-acid chain; its full sequence is MDIIPAIDLLGGRCVRLYQGDYNQAEVFDTDPVGMARRWLSQGATRLHLVDLDGAKTGEPVNQAAMAAIVQDLAIPVQVGGGVRSRQRVVELLDLGVDRVILGTVAIEQPQLVEALCAEFPGRILIGIDARDGKVATRGWLETSTVQATDLARTVEKAGAAGIIYTDIHRDGTLQGPNLEALRQLASEVNLPIIASGGVSSIADLLNLFVLSTSGVTGVIIGKALYSGDITLTDAIRAVGQGRWQDVPPDLGFSTFA.

The active-site Proton acceptor is aspartate 8. Catalysis depends on aspartate 129, which acts as the Proton donor.

This sequence belongs to the HisA/HisF family.

The protein resides in the cytoplasm. It catalyses the reaction 1-(5-phospho-beta-D-ribosyl)-5-[(5-phospho-beta-D-ribosylamino)methylideneamino]imidazole-4-carboxamide = 5-[(5-phospho-1-deoxy-D-ribulos-1-ylimino)methylamino]-1-(5-phospho-beta-D-ribosyl)imidazole-4-carboxamide. Its pathway is amino-acid biosynthesis; L-histidine biosynthesis; L-histidine from 5-phospho-alpha-D-ribose 1-diphosphate: step 4/9. This is 1-(5-phosphoribosyl)-5-[(5-phosphoribosylamino)methylideneamino] imidazole-4-carboxamide isomerase from Cyanothece sp. (strain PCC 7425 / ATCC 29141).